The sequence spans 183 residues: Translation initiation factor IF-3 (183 aa).

This sequence belongs to the IF-3 family. As to quaternary structure, monomer.

The protein localises to the cytoplasm. Functionally, IF-3 binds to the 30S ribosomal subunit and shifts the equilibrium between 70S ribosomes and their 50S and 30S subunits in favor of the free subunits, thus enhancing the availability of 30S subunits on which protein synthesis initiation begins. This Pseudomonas putida (strain ATCC 700007 / DSM 6899 / JCM 31910 / BCRC 17059 / LMG 24140 / F1) protein is Translation initiation factor IF-3.